Here is a 192-residue protein sequence, read N- to C-terminus: E3 ubiquitin-protein ligase RNF185 (192 aa).

Residues 1–13 show a composition bias toward polar residues; sequence MASKGPSASASTE. A disordered region spans residues 1–30; it reads MASKGPSASASTENSNAGGPSGSSNGTGES. Over 1–130 the chain is Cytoplasmic; it reads MASKGPSASA…GGFQGFGFGD (130 aa). The segment covering 14-27 has biased composition (low complexity); the sequence is NSNAGGPSGSSNGT. Residues 29–80 are required for ubiquitin ligase activity and protection against ER stress-induced cell death; that stretch reads ESGGQDSTFECNICLDTAKDAVISLCGHLFCWPCLHQWLETRPNRQVCPVCK. An RING-type zinc finger spans residues 39-80; that stretch reads CNICLDTAKDAVISLCGHLFCWPCLHQWLETRPNRQVCPVCK. Positions 90-123 are disordered; it reads PLYGRGSTGQQDPREKTPPRPQGQRPEPENRGGF. Residues 131–151 traverse the membrane as a helical segment; the sequence is GGFQMSFGIGAFPFGIFATAF. Topologically, residues 152–171 are mitochondrial intermembrane; sequence NINDGRPPPAVPGTPQYVDE. The helical transmembrane segment at 172 to 192 threads the bilayer; sequence QFLSRLFLFVALVIMFWLLIA.

Interacts with ATG5 and BNIP1. In terms of tissue distribution, ubiquitously expressed with high expression in testis.

The protein resides in the mitochondrion outer membrane. It is found in the endoplasmic reticulum membrane. The enzyme catalyses S-ubiquitinyl-[E2 ubiquitin-conjugating enzyme]-L-cysteine + [acceptor protein]-L-lysine = [E2 ubiquitin-conjugating enzyme]-L-cysteine + N(6)-ubiquitinyl-[acceptor protein]-L-lysine.. It functions in the pathway protein modification; protein ubiquitination. In terms of biological role, E3 ubiquitin-protein ligase that regulates selective mitochondrial autophagy by mediating 'Lys-63'-linked polyubiquitination of BNIP1. Acts in the endoplasmic reticulum (ER)-associated degradation (ERAD) pathway, which targets misfolded proteins that accumulate in the endoplasmic reticulum (ER) for ubiquitination and subsequent proteasome-mediated degradation. Protects cells from ER stress-induced apoptosis. Responsible for the cotranslational ubiquitination and degradation of CFTR in the ERAD pathway. Also acts as a regulator of the innate antiviral response by catalyzing 'Lys-27'-linked polyubiquitination of CGAS, thereby promoting CGAS cyclic GMP-AMP synthase activity. Preferentially associates with the E2 enzymes UBE2J1 and UBE2J2. In Mus musculus (Mouse), this protein is E3 ubiquitin-protein ligase RNF185 (Rnf185).